Reading from the N-terminus, the 92-residue chain is Bombyxin A-9 (92 aa).

Positions 1–19 (MKLLLAIALMLTTVMWAST) are cleaved as a signal peptide. Glutamine 20 is subject to Pyrrolidone carboxylic acid. Disulfide bonds link cysteine 29/cysteine 79, cysteine 41/cysteine 92, and cysteine 78/cysteine 83. A propeptide spans 50 to 71 (SDAQFASYGSAWLMPYSEGRDQ) (c peptide like).

This sequence belongs to the insulin family. As to quaternary structure, heterodimer of a B chain and an A chain linked by two disulfide bonds.

It localises to the secreted. In terms of biological role, brain peptide responsible for activation of prothoracic glands to produce ecdysone in insects. The sequence is that of Bombyxin A-9 (BBXA9) from Bombyx mori (Silk moth).